Here is a 456-residue protein sequence, read N- to C-terminus: Bifunctional protein GlmU (456 aa).

Positions 1-230 (MDKRFAVVLA…FQETLGVNDR (230 aa)) are pyrophosphorylase. UDP-N-acetyl-alpha-D-glucosamine is bound by residues 9-12 (LAAG), lysine 23, glutamine 73, and 78-79 (GT). A Mg(2+)-binding site is contributed by aspartate 103. UDP-N-acetyl-alpha-D-glucosamine is bound by residues glycine 140, glutamate 155, asparagine 170, and asparagine 228. A Mg(2+)-binding site is contributed by asparagine 228. Residues 231–251 (VALSQAEQFMKERINKRHMQN) form a linker region. Residues 252 to 456 (GVTLIDPMNT…DDYVKNIHKK (205 aa)) are N-acetyltransferase. UDP-N-acetyl-alpha-D-glucosamine contacts are provided by arginine 333 and lysine 351. Histidine 363 serves as the catalytic Proton acceptor. Positions 366 and 377 each coordinate UDP-N-acetyl-alpha-D-glucosamine. Acetyl-CoA-binding positions include 386–387 (NY), alanine 423, and arginine 440.

The protein in the N-terminal section; belongs to the N-acetylglucosamine-1-phosphate uridyltransferase family. It in the C-terminal section; belongs to the transferase hexapeptide repeat family. As to quaternary structure, homotrimer. Requires Mg(2+) as cofactor.

The protein localises to the cytoplasm. The catalysed reaction is alpha-D-glucosamine 1-phosphate + acetyl-CoA = N-acetyl-alpha-D-glucosamine 1-phosphate + CoA + H(+). It catalyses the reaction N-acetyl-alpha-D-glucosamine 1-phosphate + UTP + H(+) = UDP-N-acetyl-alpha-D-glucosamine + diphosphate. Its pathway is nucleotide-sugar biosynthesis; UDP-N-acetyl-alpha-D-glucosamine biosynthesis; N-acetyl-alpha-D-glucosamine 1-phosphate from alpha-D-glucosamine 6-phosphate (route II): step 2/2. It participates in nucleotide-sugar biosynthesis; UDP-N-acetyl-alpha-D-glucosamine biosynthesis; UDP-N-acetyl-alpha-D-glucosamine from N-acetyl-alpha-D-glucosamine 1-phosphate: step 1/1. The protein operates within bacterial outer membrane biogenesis; LPS lipid A biosynthesis. In terms of biological role, catalyzes the last two sequential reactions in the de novo biosynthetic pathway for UDP-N-acetylglucosamine (UDP-GlcNAc). The C-terminal domain catalyzes the transfer of acetyl group from acetyl coenzyme A to glucosamine-1-phosphate (GlcN-1-P) to produce N-acetylglucosamine-1-phosphate (GlcNAc-1-P), which is converted into UDP-GlcNAc by the transfer of uridine 5-monophosphate (from uridine 5-triphosphate), a reaction catalyzed by the N-terminal domain. This Bacillus subtilis (strain 168) protein is Bifunctional protein GlmU.